A 311-amino-acid polypeptide reads, in one-letter code: Methionyl-tRNA formyltransferase (311 aa).

112–115 (SLLP) lines the (6S)-5,6,7,8-tetrahydrofolate pocket.

Belongs to the Fmt family.

It carries out the reaction L-methionyl-tRNA(fMet) + (6R)-10-formyltetrahydrofolate = N-formyl-L-methionyl-tRNA(fMet) + (6S)-5,6,7,8-tetrahydrofolate + H(+). Functionally, attaches a formyl group to the free amino group of methionyl-tRNA(fMet). The formyl group appears to play a dual role in the initiator identity of N-formylmethionyl-tRNA by promoting its recognition by IF2 and preventing the misappropriation of this tRNA by the elongation apparatus. The polypeptide is Methionyl-tRNA formyltransferase (Bradyrhizobium sp. (strain ORS 278)).